The chain runs to 306 residues: MSELIPLSEVGVVNPTSATTNRPRRPEWLKARAPGGVNYHDVLRLMREKNLHTVCEEARCPNIGECWNHRTATFLLLGDICTRGCRYCAIGKGKPKPIDEEEPERVAESVAHLRLKFAVLTSVNRDDVPDGGAHIFARTIELIRQKVPDCKVEVLIPDFDGNWDALAMVLDAEPDVLNHNIETVPRLFRRFRPRAKFEQSIELLARARAAHPHLVTKSGMMVGAGETNEEVYEVIDRLREVDVNVLTIGQYLAPDASYWPVHRYVTPAEFADFRAYALARGFRHVESGPLVRSSYNAHLHVGAAQH.

Residues Cys-55, Cys-60, Cys-66, Cys-81, Cys-85, Cys-88, and Ser-294 each coordinate [4Fe-4S] cluster. The Radical SAM core domain occupies 67–283; it reads WNHRTATFLL…RAYALARGFR (217 aa).

The protein belongs to the radical SAM superfamily. Lipoyl synthase family. [4Fe-4S] cluster serves as cofactor.

It localises to the cytoplasm. The enzyme catalyses [[Fe-S] cluster scaffold protein carrying a second [4Fe-4S](2+) cluster] + N(6)-octanoyl-L-lysyl-[protein] + 2 oxidized [2Fe-2S]-[ferredoxin] + 2 S-adenosyl-L-methionine + 4 H(+) = [[Fe-S] cluster scaffold protein] + N(6)-[(R)-dihydrolipoyl]-L-lysyl-[protein] + 4 Fe(3+) + 2 hydrogen sulfide + 2 5'-deoxyadenosine + 2 L-methionine + 2 reduced [2Fe-2S]-[ferredoxin]. It functions in the pathway protein modification; protein lipoylation via endogenous pathway; protein N(6)-(lipoyl)lysine from octanoyl-[acyl-carrier-protein]: step 2/2. Catalyzes the radical-mediated insertion of two sulfur atoms into the C-6 and C-8 positions of the octanoyl moiety bound to the lipoyl domains of lipoate-dependent enzymes, thereby converting the octanoylated domains into lipoylated derivatives. The chain is Lipoyl synthase from Chloroflexus aggregans (strain MD-66 / DSM 9485).